A 443-amino-acid polypeptide reads, in one-letter code: Probable 26S proteasome regulatory subunit 4 (443 aa).

The segment at 1–53 (MGQQQSGFGGRGNDRGAGDGEKKEKKKYEAPIPSRIGKKKKGSKGPDAASKLP) is disordered. Positions 12–29 (GNDRGAGDGEKKEKKKYE) are enriched in basic and acidic residues. Position 229–236 (229–236 (GCPGTGKT)) interacts with ATP.

Belongs to the AAA ATPase family.

It localises to the cytoplasm. The protein resides in the nucleus. Its function is as follows. The 26S proteasome is involved in the ATP-dependent degradation of ubiquitinated proteins. The regulatory (or ATPase) complex confers ATP dependency and substrate specificity to the 26S complex. May play a role in the degradation of microtubule severing protein mei-1. The protein is Probable 26S proteasome regulatory subunit 4 (rpt-2) of Caenorhabditis elegans.